Here is a 554-residue protein sequence, read N- to C-terminus: Potassium/proton antiporter CemA (554 aa).

Residues 50-70 (SLFVVLFIPFFINIFTKIYVF) traverse the membrane as a helical segment. Residues 113–410 (KTENFFPEKP…VPYNFNKNTE (298 aa)) form an insert region. The next 3 helical transmembrane spans lie at 429-449 (ISAI…LFLL), 479-499 (MLLF…EVIF), and 514-534 (IIFL…KYWI).

It belongs to the CemA family.

It localises to the plastid. The protein resides in the chloroplast inner membrane. It catalyses the reaction K(+)(in) + H(+)(out) = K(+)(out) + H(+)(in). Contributes to K(+)/H(+) antiport activity by supporting proton efflux to control proton extrusion and homeostasis in chloroplasts in a light-dependent manner to modulate photosynthesis. Prevents excessive induction of non-photochemical quenching (NPQ) under continuous-light conditions. Indirectly promotes efficient inorganic carbon uptake into chloroplasts. The chain is Potassium/proton antiporter CemA from Stigeoclonium helveticum (Green alga).